The sequence spans 143 residues: Brain ribonuclease (143 aa).

The disordered stretch occupies residues lysine 1 to glycine 21. 2 residues coordinate substrate: lysine 7 and arginine 10. The Proton acceptor role is filled by histidine 12. 4 cysteine pairs are disulfide-bonded: cysteine 26–cysteine 84, cysteine 40–cysteine 95, cysteine 58–cysteine 110, and cysteine 65–cysteine 72. Lysine 41 to threonine 45 is a substrate binding site. Asparagine 62 is a glycosylation site (N-linked (GlcNAc...) asparagine). Positions 66 and 85 each coordinate substrate. The active-site Proton donor is histidine 119. O-linked (GalNAc...) threonine glycosylation is present at threonine 129. An O-linked (GalNAc...) serine glycan is attached at serine 133.

Belongs to the pancreatic ribonuclease family.

It is found in the secreted. The chain is Brain ribonuclease (BRN) from Ovis aries (Sheep).